A 737-amino-acid chain; its full sequence is Phosphoribosylformylglycinamidine synthase subunit PurL (737 aa).

The active site involves H50. Y53 and K92 together coordinate ATP. E94 contacts Mg(2+). Substrate-binding positions include 95–98 and R117; that span reads SHNH. H96 serves as the catalytic Proton acceptor. D118 contacts Mg(2+). Residue Q241 coordinates substrate. Position 269 (D269) interacts with Mg(2+). Position 313–315 (313–315) interacts with substrate; it reads ESQ. Residues D495 and G532 each contribute to the ATP site. N533 lines the Mg(2+) pocket. S535 is a substrate binding site.

This sequence belongs to the FGAMS family. Monomer. Part of the FGAM synthase complex composed of 1 PurL, 1 PurQ and 2 PurS subunits.

It localises to the cytoplasm. The catalysed reaction is N(2)-formyl-N(1)-(5-phospho-beta-D-ribosyl)glycinamide + L-glutamine + ATP + H2O = 2-formamido-N(1)-(5-O-phospho-beta-D-ribosyl)acetamidine + L-glutamate + ADP + phosphate + H(+). It participates in purine metabolism; IMP biosynthesis via de novo pathway; 5-amino-1-(5-phospho-D-ribosyl)imidazole from N(2)-formyl-N(1)-(5-phospho-D-ribosyl)glycinamide: step 1/2. Part of the phosphoribosylformylglycinamidine synthase complex involved in the purines biosynthetic pathway. Catalyzes the ATP-dependent conversion of formylglycinamide ribonucleotide (FGAR) and glutamine to yield formylglycinamidine ribonucleotide (FGAM) and glutamate. The FGAM synthase complex is composed of three subunits. PurQ produces an ammonia molecule by converting glutamine to glutamate. PurL transfers the ammonia molecule to FGAR to form FGAM in an ATP-dependent manner. PurS interacts with PurQ and PurL and is thought to assist in the transfer of the ammonia molecule from PurQ to PurL. The sequence is that of Phosphoribosylformylglycinamidine synthase subunit PurL from Bartonella bacilliformis (strain ATCC 35685 / KC583 / Herrer 020/F12,63).